The following is a 410-amino-acid chain: Arginine deiminase (410 aa).

Catalysis depends on Cys399, which acts as the Amidino-cysteine intermediate.

This sequence belongs to the arginine deiminase family.

It localises to the cytoplasm. It carries out the reaction L-arginine + H2O = L-citrulline + NH4(+). It functions in the pathway amino-acid degradation; L-arginine degradation via ADI pathway; carbamoyl phosphate from L-arginine: step 1/2. The sequence is that of Arginine deiminase from Listeria monocytogenes serovar 1/2a (strain ATCC BAA-679 / EGD-e).